A 185-amino-acid polypeptide reads, in one-letter code: Ribosome-recycling factor (185 aa).

This sequence belongs to the RRF family.

It is found in the cytoplasm. Its function is as follows. Responsible for the release of ribosomes from messenger RNA at the termination of protein biosynthesis. May increase the efficiency of translation by recycling ribosomes from one round of translation to another. In Corynebacterium efficiens (strain DSM 44549 / YS-314 / AJ 12310 / JCM 11189 / NBRC 100395), this protein is Ribosome-recycling factor.